The primary structure comprises 127 residues: Aspartate 1-decarboxylase (127 aa).

The active-site Schiff-base intermediate with substrate; via pyruvic acid is the Ser-25. Ser-25 carries the post-translational modification Pyruvic acid (Ser). Thr-57 lines the substrate pocket. Tyr-58 acts as the Proton donor in catalysis. 73–75 lines the substrate pocket; sequence GAA.

This sequence belongs to the PanD family. Heterooctamer of four alpha and four beta subunits. The cofactor is pyruvate. Post-translationally, is synthesized initially as an inactive proenzyme, which is activated by self-cleavage at a specific serine bond to produce a beta-subunit with a hydroxyl group at its C-terminus and an alpha-subunit with a pyruvoyl group at its N-terminus.

It localises to the cytoplasm. The catalysed reaction is L-aspartate + H(+) = beta-alanine + CO2. It participates in cofactor biosynthesis; (R)-pantothenate biosynthesis; beta-alanine from L-aspartate: step 1/1. Catalyzes the pyruvoyl-dependent decarboxylation of aspartate to produce beta-alanine. This chain is Aspartate 1-decarboxylase, found in Listeria welshimeri serovar 6b (strain ATCC 35897 / DSM 20650 / CCUG 15529 / CIP 8149 / NCTC 11857 / SLCC 5334 / V8).